The chain runs to 226 residues: Orotidine 5'-phosphate decarboxylase (226 aa).

Substrate is bound by residues aspartate 8, lysine 30, 58-67 (DLKIHDIPNT), threonine 117, arginine 177, glutamine 186, glycine 206, and arginine 207. Lysine 60 acts as the Proton donor in catalysis.

This sequence belongs to the OMP decarboxylase family. Type 1 subfamily. In terms of assembly, homodimer.

The enzyme catalyses orotidine 5'-phosphate + H(+) = UMP + CO2. It participates in pyrimidine metabolism; UMP biosynthesis via de novo pathway; UMP from orotate: step 2/2. Catalyzes the decarboxylation of orotidine 5'-monophosphate (OMP) to uridine 5'-monophosphate (UMP). The sequence is that of Orotidine 5'-phosphate decarboxylase from Campylobacter jejuni subsp. jejuni serotype O:6 (strain 81116 / NCTC 11828).